A 114-amino-acid polypeptide reads, in one-letter code: T cell receptor beta variable 6-6 (114 aa).

The signal sequence occupies residues 1-21 (MSISLLCCAAFPLLWAGPVNA). An Ig-like domain is found at 22–114 (GVTQTPKFRI…TSVYFCASSY (93 aa)). Cysteine 42 and cysteine 110 are joined by a disulfide. Residue asparagine 84 is glycosylated (N-linked (GlcNAc...) asparagine).

In terms of assembly, alpha-beta TR is a heterodimer composed of an alpha and beta chain; disulfide-linked. The alpha-beta TR is associated with the transmembrane signaling CD3 coreceptor proteins to form the TR-CD3 (TcR or TCR). The assembly of alpha-beta TR heterodimers with CD3 occurs in the endoplasmic reticulum where a single alpha-beta TR heterodimer associates with one CD3D-CD3E heterodimer, one CD3G-CD3E heterodimer and one CD247 homodimer forming a stable octameric structure. CD3D-CD3E and CD3G-CD3E heterodimers preferentially associate with TR alpha and TR beta chains, respectively. The association of the CD247 homodimer is the last step of TcR assembly in the endoplasmic reticulum and is required for transport to the cell surface.

Its subcellular location is the cell membrane. In terms of biological role, v region of the variable domain of T cell receptor (TR) beta chain that participates in the antigen recognition. Alpha-beta T cell receptors are antigen specific receptors which are essential to the immune response and are present on the cell surface of T lymphocytes. Recognize peptide-major histocompatibility (MH) (pMH) complexes that are displayed by antigen presenting cells (APC), a prerequisite for efficient T cell adaptive immunity against pathogens. Binding of alpha-beta TR to pMH complex initiates TR-CD3 clustering on the cell surface and intracellular activation of LCK that phosphorylates the ITAM motifs of CD3G, CD3D, CD3E and CD247 enabling the recruitment of ZAP70. In turn ZAP70 phosphorylates LAT, which recruits numerous signaling molecules to form the LAT signalosome. The LAT signalosome propagates signal branching to three major signaling pathways, the calcium, the mitogen-activated protein kinase (MAPK) kinase and the nuclear factor NF-kappa-B (NF-kB) pathways, leading to the mobilization of transcription factors that are critical for gene expression and essential for T cell growth and differentiation. The T cell repertoire is generated in the thymus, by V-(D)-J rearrangement. This repertoire is then shaped by intrathymic selection events to generate a peripheral T cell pool of self-MH restricted, non-autoaggressive T cells. Post-thymic interaction of alpha-beta TR with the pMH complexes shapes TR structural and functional avidity. The protein is T cell receptor beta variable 6-6 of Homo sapiens (Human).